The following is a 276-amino-acid chain: Large ribosomal subunit protein uL2c (276 aa).

The tract at residues 225-276 (AMNPVDHPHGGGEGRTPIGRKKPVTPWGYSALGKKSRKRNRYSDASILRRRE) is disordered.

This sequence belongs to the universal ribosomal protein uL2 family. Part of the 50S ribosomal subunit.

The protein resides in the plastid. Its subcellular location is the chloroplast. The protein is Large ribosomal subunit protein uL2c (rpl2) of Pinus thunbergii (Japanese black pine).